A 101-amino-acid chain; its full sequence is UPF0358 protein EF_2458 (101 aa).

Belongs to the UPF0358 family.

The sequence is that of UPF0358 protein EF_2458 from Enterococcus faecalis (strain ATCC 700802 / V583).